Reading from the N-terminus, the 164-residue chain is SsrA-binding protein (164 aa).

Belongs to the SmpB family.

It is found in the cytoplasm. Its function is as follows. Required for rescue of stalled ribosomes mediated by trans-translation. Binds to transfer-messenger RNA (tmRNA), required for stable association of tmRNA with ribosomes. tmRNA and SmpB together mimic tRNA shape, replacing the anticodon stem-loop with SmpB. tmRNA is encoded by the ssrA gene; the 2 termini fold to resemble tRNA(Ala) and it encodes a 'tag peptide', a short internal open reading frame. During trans-translation Ala-aminoacylated tmRNA acts like a tRNA, entering the A-site of stalled ribosomes, displacing the stalled mRNA. The ribosome then switches to translate the ORF on the tmRNA; the nascent peptide is terminated with the 'tag peptide' encoded by the tmRNA and targeted for degradation. The ribosome is freed to recommence translation, which seems to be the essential function of trans-translation. This chain is SsrA-binding protein, found in Corynebacterium glutamicum (strain R).